The primary structure comprises 556 residues: 2-succinyl-5-enolpyruvyl-6-hydroxy-3-cyclohexene-1-carboxylate synthase (556 aa).

It belongs to the TPP enzyme family. MenD subfamily. Homodimer. It depends on Mg(2+) as a cofactor. The cofactor is Mn(2+). Thiamine diphosphate is required as a cofactor.

It catalyses the reaction isochorismate + 2-oxoglutarate + H(+) = 5-enolpyruvoyl-6-hydroxy-2-succinyl-cyclohex-3-ene-1-carboxylate + CO2. Its pathway is quinol/quinone metabolism; 1,4-dihydroxy-2-naphthoate biosynthesis; 1,4-dihydroxy-2-naphthoate from chorismate: step 2/7. It functions in the pathway quinol/quinone metabolism; menaquinone biosynthesis. Functionally, catalyzes the thiamine diphosphate-dependent decarboxylation of 2-oxoglutarate and the subsequent addition of the resulting succinic semialdehyde-thiamine pyrophosphate anion to isochorismate to yield 2-succinyl-5-enolpyruvyl-6-hydroxy-3-cyclohexene-1-carboxylate (SEPHCHC). This Escherichia coli O17:K52:H18 (strain UMN026 / ExPEC) protein is 2-succinyl-5-enolpyruvyl-6-hydroxy-3-cyclohexene-1-carboxylate synthase.